A 344-amino-acid chain; its full sequence is Uroporphyrinogen decarboxylase (344 aa).

Residues 26-30 (RQAGR), aspartate 76, tyrosine 151, serine 206, and histidine 321 each bind substrate.

Belongs to the uroporphyrinogen decarboxylase family. In terms of assembly, homodimer.

It localises to the cytoplasm. It carries out the reaction uroporphyrinogen III + 4 H(+) = coproporphyrinogen III + 4 CO2. Its pathway is porphyrin-containing compound metabolism; protoporphyrin-IX biosynthesis; coproporphyrinogen-III from 5-aminolevulinate: step 4/4. Its function is as follows. Catalyzes the decarboxylation of four acetate groups of uroporphyrinogen-III to yield coproporphyrinogen-III. This is Uroporphyrinogen decarboxylase from Sinorhizobium fredii (strain NBRC 101917 / NGR234).